We begin with the raw amino-acid sequence, 371 residues long: Terpene cyclase 6 (371 aa).

Mg(2+)-binding residues include D144, N266, S270, and E274. The D(D/E)XX(D/E) motif signature appears at 144-148 (DDVME). Residues 266–274 (NDLYSYDKE) carry the NSE motif motif. A WxxxxxRY motif motif is present at residues 352–359 (HHATLGRY). 2 residues coordinate (2E,6E)-farnesyl diphosphate: R358 and Y359.

This sequence belongs to the terpene synthase family. Homodimer. The cofactor is Mg(2+).

The enzyme catalyses (2E,6E)-farnesyl diphosphate + H2O = (-)-alpha-acorenol + diphosphate. It participates in sesquiterpene biosynthesis. Functionally, terpene cyclase that catalyzes the cyclization of farnesyl diphosphate (FPP) to the spirocyclic sesquiterpene alpha-acorenol. The chain is Terpene cyclase 6 from Gibberella fujikuroi (strain CBS 195.34 / IMI 58289 / NRRL A-6831) (Bakanae and foot rot disease fungus).